A 91-amino-acid polypeptide reads, in one-letter code: UPF0250 protein HCH_05838 (91 aa).

The protein belongs to the UPF0250 family.

The chain is UPF0250 protein HCH_05838 from Hahella chejuensis (strain KCTC 2396).